We begin with the raw amino-acid sequence, 1696 residues long: E3 ubiquitin-protein ligase listerin (1696 aa).

HEAT repeat units follow at residues 17–55 (RGVL…KVKK), 102–140 (FCKE…KYFR), 144–181 (CSLL…WKYS), 209–250 (AEAS…CWEH), 252–289 (NAQK…RVPT), 354–394 (LISD…KAES), 431–468 (EKNL…GEGD), 542–580 (FPSI…PAVQ), 596–634 (EESD…KWSV), 921–958 (LCTA…AEML), 992–1029 (MDLS…KRGA), 1108–1148 (DLCQ…LIGL), 1150–1188 (VEMI…WLES), 1245–1282 (GIYS…TLGY), 1307–1344 (DSLQ…DLPG), 1371–1405 (VLAI…CFVL), and 1406–1442 (GYLL…LNKL). Residues 1645-1692 (CMICFSVIHGSNYSLPKKACRTCKKKFHSECLYKWFTSSNKSTCPLCR) form an RING-type zinc finger.

Belongs to the LTN1 family. In terms of assembly, component of the ribosome quality control complex (RQC), composed of at least the E3 ubiquitin ligase LTN1 and NEMF associated with the 60S ribosomal subunit. The complex probably also contains TCF25 as well as VCP/p97 and its ubiquitin-binding cofactors.

It localises to the cytoplasm. It is found in the cytosol. The enzyme catalyses S-ubiquitinyl-[E2 ubiquitin-conjugating enzyme]-L-cysteine + [acceptor protein]-L-lysine = [E2 ubiquitin-conjugating enzyme]-L-cysteine + N(6)-ubiquitinyl-[acceptor protein]-L-lysine.. The protein operates within protein modification; protein ubiquitination. In terms of biological role, E3 ubiquitin-protein ligase component of the ribosome quality control complex (RQC), a ribosome-associated complex that mediates ubiquitination and extraction of incompletely synthesized nascent chains for proteasomal degradation. Within the RQC complex, LTN1 is recruited to stalled 60S ribosomal subunits by NEMF and mediates ubiquitination of stalled nascent chains. Ubiquitination leads to VCP/p97 recruitment for extraction and degradation of the incomplete translation product. This chain is E3 ubiquitin-protein ligase listerin (ltn1), found in Xenopus tropicalis (Western clawed frog).